We begin with the raw amino-acid sequence, 295 residues long: Deleted in azoospermia-like (295 aa).

Residues 1 to 10 show a composition bias toward polar residues; it reads MSAANPETPN. The tract at residues 1-25 is disordered; it reads MSAANPETPNSTISREASTQSSSAA. The span at 11–25 shows a compositional bias: low complexity; that stretch reads STISREASTQSSSAA. The 76-residue stretch at 40-115 folds into the RRM domain; that stretch reads NTVFVGGIDV…KKLKLGPAIR (76 aa). The homodimerization stretch occupies residues 80–132; that stretch reads KGYGFVSFFNDVDVQKIVESQINFHGKKLKLGPAIRKQNLCAYHVQPRPLVFN. Residues 167–190 enclose the DAZ domain; the sequence is AYPTYPNSPVQVITGYQLPVYNYQ. The residue at position 276 (Y276) is a Phosphotyrosine.

It belongs to the RRM DAZ family. In terms of assembly, homodimer and heterodimer. Forms a heterodimer with DAZ. Interacts with BOLL, DAZAP1 and DAZAP2. Interacts with PUM2 Multiple DAZL RRMs can bind to a single RNA containing multiple GUU triplets. As to expression, testis specific.

The protein localises to the cytoplasm. The protein resides in the nucleus. In terms of biological role, RNA-binding protein, which is essential for gametogenesis in both males and females. Plays a central role during spermatogenesis. Acts by binding to the 3'-UTR of mRNA, specifically recognizing GUU triplets, and thereby regulating the translation of key transcripts. This is Deleted in azoospermia-like (DAZL) from Macaca fascicularis (Crab-eating macaque).